Reading from the N-terminus, the 156-residue chain is Small ribosomal subunit protein uS7 (156 aa).

Belongs to the universal ribosomal protein uS7 family. Part of the 30S ribosomal subunit. Contacts proteins S9 and S11.

One of the primary rRNA binding proteins, it binds directly to 16S rRNA where it nucleates assembly of the head domain of the 30S subunit. Is located at the subunit interface close to the decoding center, probably blocks exit of the E-site tRNA. This chain is Small ribosomal subunit protein uS7, found in Bacillus pumilus (strain SAFR-032).